Here is a 344-residue protein sequence, read N- to C-terminus: Heat-inducible transcription repressor HrcA (344 aa).

The protein belongs to the HrcA family.

Functionally, negative regulator of class I heat shock genes (grpE-dnaK-dnaJ and groELS operons). Prevents heat-shock induction of these operons. The sequence is that of Heat-inducible transcription repressor HrcA from Streptococcus uberis (strain ATCC BAA-854 / 0140J).